The chain runs to 102 residues: Small ribosomal subunit protein uS10 (102 aa).

This sequence belongs to the universal ribosomal protein uS10 family. Part of the 30S ribosomal subunit.

Involved in the binding of tRNA to the ribosomes. The polypeptide is Small ribosomal subunit protein uS10 (Listeria innocua serovar 6a (strain ATCC BAA-680 / CLIP 11262)).